The chain runs to 2278 residues: Protein Ycf2 (2278 aa).

This sequence belongs to the Ycf2 family.

The protein localises to the plastid. It localises to the chloroplast stroma. The protein resides in the chromoplast stroma. In terms of biological role, probable ATPase of unknown function. Its presence in a non-photosynthetic plant (Epifagus virginiana) and experiments in tobacco indicate that it has an essential function which is probably not related to photosynthesis. The chain is Protein Ycf2 (ycf2-A) from Solanum lycopersicum (Tomato).